Here is a 374-residue protein sequence, read N- to C-terminus: tRNA N6-adenosine threonylcarbamoyltransferase (374 aa).

Positions 117 and 121 each coordinate Fe cation. Substrate-binding positions include 140–144 (LVSGG), aspartate 174, glycine 187, aspartate 191, and asparagine 283. Aspartate 311 is a Fe cation binding site. Residues 337–352 (ADSSLPVTEPHVPGQG) show a composition bias toward low complexity. Positions 337-374 (ADSSLPVTEPHVPGQGHPHGHPHGHDHVHEVSKENLYS) are disordered. A compositionally biased stretch (basic and acidic residues) spans 359-374 (HGHDHVHEVSKENLYS).

Belongs to the KAE1 / TsaD family. Fe(2+) serves as cofactor.

The protein resides in the cytoplasm. The catalysed reaction is L-threonylcarbamoyladenylate + adenosine(37) in tRNA = N(6)-L-threonylcarbamoyladenosine(37) in tRNA + AMP + H(+). Required for the formation of a threonylcarbamoyl group on adenosine at position 37 (t(6)A37) in tRNAs that read codons beginning with adenine. Is involved in the transfer of the threonylcarbamoyl moiety of threonylcarbamoyl-AMP (TC-AMP) to the N6 group of A37, together with TsaE and TsaB. TsaD likely plays a direct catalytic role in this reaction. The chain is tRNA N6-adenosine threonylcarbamoyltransferase from Streptomyces coelicolor (strain ATCC BAA-471 / A3(2) / M145).